We begin with the raw amino-acid sequence, 497 residues long: Glycerol kinase (497 aa).

ADP is bound at residue Thr11. Thr11, Ser12, and Ser13 together coordinate ATP. Thr11 is a sn-glycerol 3-phosphate binding site. Arg15 is an ADP binding site. 4 residues coordinate sn-glycerol 3-phosphate: Arg81, Glu82, Tyr133, and Asp242. Arg81, Glu82, Tyr133, Asp242, and Gln243 together coordinate glycerol. 2 residues coordinate ADP: Thr264 and Gly307. 4 residues coordinate ATP: Thr264, Gly307, Gln311, and Gly412. Residues Gly412 and Asn416 each contribute to the ADP site.

Belongs to the FGGY kinase family.

The catalysed reaction is glycerol + ATP = sn-glycerol 3-phosphate + ADP + H(+). Its pathway is polyol metabolism; glycerol degradation via glycerol kinase pathway; sn-glycerol 3-phosphate from glycerol: step 1/1. Inhibited by fructose 1,6-bisphosphate (FBP). Functionally, key enzyme in the regulation of glycerol uptake and metabolism. Catalyzes the phosphorylation of glycerol to yield sn-glycerol 3-phosphate. The polypeptide is Glycerol kinase (Polaromonas sp. (strain JS666 / ATCC BAA-500)).